A 422-amino-acid chain; its full sequence is Glutamyl-tRNA reductase (422 aa).

Residues 49 to 52 (TCNR), S107, 112 to 114 (EPQ), and Q118 contribute to the substrate site. Residue C50 is the Nucleophile of the active site. Residue 187–192 (GAGETI) coordinates NADP(+).

It belongs to the glutamyl-tRNA reductase family. In terms of assembly, homodimer.

It carries out the reaction (S)-4-amino-5-oxopentanoate + tRNA(Glu) + NADP(+) = L-glutamyl-tRNA(Glu) + NADPH + H(+). Its pathway is porphyrin-containing compound metabolism; protoporphyrin-IX biosynthesis; 5-aminolevulinate from L-glutamyl-tRNA(Glu): step 1/2. In terms of biological role, catalyzes the NADPH-dependent reduction of glutamyl-tRNA(Glu) to glutamate 1-semialdehyde (GSA). The protein is Glutamyl-tRNA reductase of Pseudomonas paraeruginosa (strain DSM 24068 / PA7) (Pseudomonas aeruginosa (strain PA7)).